The chain runs to 128 residues: Transcription antitermination protein NusB (128 aa).

It belongs to the NusB family.

Its function is as follows. Involved in transcription antitermination. Required for transcription of ribosomal RNA (rRNA) genes. Binds specifically to the boxA antiterminator sequence of the ribosomal RNA (rrn) operons. The chain is Transcription antitermination protein NusB from Staphylococcus haemolyticus (strain JCSC1435).